A 186-amino-acid polypeptide reads, in one-letter code: MKRTQYNNLVSSYARALFLVSENKLSVVRKEVEFLLAFFKSQHDVFIYLSHPMISFARKKEVIFSVNEHLSESLVKFIAVIFANKRSNLLISVLEKFLTLVRESENELEITIKSAETLSESNIKIITESLSFLGKIVRVDNAVDPSILGGFIVKYGFNLIDASLKSYLDRLVDLSKVEILKTRNFI.

Belongs to the ATPase delta chain family. As to quaternary structure, F-type ATPases have 2 components, F(1) - the catalytic core - and F(0) - the membrane proton channel. F(1) has five subunits: alpha(3), beta(3), gamma(1), delta(1), epsilon(1). F(0) has three main subunits: a(1), b(2) and c(10-14). The alpha and beta chains form an alternating ring which encloses part of the gamma chain. F(1) is attached to F(0) by a central stalk formed by the gamma and epsilon chains, while a peripheral stalk is formed by the delta and b chains.

The protein resides in the cell membrane. F(1)F(0) ATP synthase produces ATP from ADP in the presence of a proton or sodium gradient. F-type ATPases consist of two structural domains, F(1) containing the extramembraneous catalytic core and F(0) containing the membrane proton channel, linked together by a central stalk and a peripheral stalk. During catalysis, ATP synthesis in the catalytic domain of F(1) is coupled via a rotary mechanism of the central stalk subunits to proton translocation. In terms of biological role, this protein is part of the stalk that links CF(0) to CF(1). It either transmits conformational changes from CF(0) to CF(1) or is implicated in proton conduction. The sequence is that of ATP synthase subunit delta from Wolbachia sp. subsp. Brugia malayi (strain TRS).